The sequence spans 233 residues: MTRLQKGSIGTLLTGALLGIVLVAVVFGGEAALSTEEFCTSCHSMTYPQAELKQSTHYGALGVNPGCKDCHIPQGIENFHLAVATHAIDGARELYLELVNDYSTLEKFNERRLEMAHDARMNLKKWDSITCRTCHKKPAPPGESAQAEHKKMETEGATCIDCHQNLVHEEVPMTDLNASIAQGKLVLKPEDDGDDEEADEDEDEETEEADDSSDSESASSSDNSDNEDDNNDE.

A signal peptide spans 1-28; the sequence is MTRLQKGSIGTLLTGALLGIVLVAVVFG. Heme-binding residues include cysteine 39, cysteine 42, methionine 45, cysteine 67, cysteine 70, histidine 71, glutamate 93, cysteine 131, cysteine 134, histidine 135, cysteine 159, cysteine 162, histidine 163, and histidine 168. Residues 182–233 are disordered; sequence QGKLVLKPEDDGDDEEADEDEDEETEEADDSSDSESASSSDNSDNEDDNNDE. 2 stretches are compositionally biased toward acidic residues: residues 191–214 and 224–233; these read DDGDDEEADEDEDEETEEADDSSD and SDNEDDNNDE.

Belongs to the NapC/NirT/NrfH family. Post-translationally, binds 4 heme groups per subunit.

It localises to the periplasm. The chain is Probable tetraheme cytochrome c-type (cycX1) from Nitrosomonas europaea (strain ATCC 19718 / CIP 103999 / KCTC 2705 / NBRC 14298).